The sequence spans 956 residues: uncharacterized protein (956 aa).

Residues 40 to 141 form the Fibronectin type-III domain; it reads PATKVSIDKI…IYCMTKAREA (102 aa). Disordered stretches follow at residues 152–173 and 488–600; these read RNTI…PAPL and NNGD…SYSH. Polar residues-rich tracts occupy residues 153–165 and 488–523; these read NTIT…QPRN and NNGD…SRTG. Position 154 is a phosphothreonine (Thr-154). 2 positions are modified to phosphoserine: Ser-501 and Ser-520. Positions 524 to 543 are enriched in low complexity; that stretch reads SIDLISNNNKSINNSNADSA. Positions 552–563 are enriched in polar residues; sequence VSYSPSNEPIQP. Low complexity predominate over residues 564–574; sequence SSSLLSQLTQD. The segment covering 578-599 has biased composition (polar residues); the sequence is RSMLSNHISSNNENKQQPSSYS. A phosphoserine mark is found at Ser-802, Ser-842, and Ser-895. The disordered stretch occupies residues 875-956; it reads VGPKVPAKEP…NLFNPHSHDS (82 aa). A compositionally biased stretch (low complexity) spans 895 to 904; that stretch reads SNSSISSAWS.

This is an uncharacterized protein from Saccharomyces cerevisiae (strain ATCC 204508 / S288c) (Baker's yeast).